The following is a 62-amino-acid chain: Large ribosomal subunit protein bL28 (62 aa).

This sequence belongs to the bacterial ribosomal protein bL28 family.

The sequence is that of Large ribosomal subunit protein bL28 from Helicobacter pylori (strain HPAG1).